A 2148-amino-acid polypeptide reads, in one-letter code: General transcription factor 3C polypeptide 1 (2148 aa).

Over residues 473 to 487 (GEEAFLSDSESEEES) the composition is skewed to acidic residues. 2 disordered regions span residues 473–568 (GEEA…FDPH) and 587–609 (NPKE…KPHK). The segment covering 491–502 (GKRRGRGSRGHS) has biased composition (basic residues). Lys533 is covalently cross-linked (Glycyl lysine isopeptide (Lys-Gly) (interchain with G-Cter in SUMO2)). Ser666 carries the post-translational modification Phosphoserine. 2 disordered regions span residues 717 to 771 (STAN…EKMG) and 818 to 863 (TGEQ…SSWE). 2 stretches are compositionally biased toward basic and acidic residues: residues 759-770 (ESTRVKKTDEKM) and 825-835 (HSERKTGKQEP). Residues Lys769 and Lys832 each participate in a glycyl lysine isopeptide (Lys-Gly) (interchain with G-Cter in SUMO2) cross-link. Ser1062 bears the Phosphoserine mark. Positions 1186-1195 (EHFELDREPT) are enriched in basic and acidic residues. Disordered stretches follow at residues 1186–1238 (EHFE…KKLR), 1597–1627 (KSLG…SVEV), 1823–1881 (KASG…LPAK), 1893–1928 (SPRP…ESVG), and 2127–2148 (PRPS…ATSR). Position 1195 is a phosphothreonine (Thr1195). Residues 1198–1214 (RNRKVRGGKSQKRKRLK) are compositionally biased toward basic residues. Positions 1228 to 1238 (EHPEAKSKKLR) are enriched in basic and acidic residues. Residues 1605–1616 (LDDDDEEEDLDE) show a composition bias toward acidic residues. Residues Ser1624, Ser1853, and Ser1893 each carry the phosphoserine modification. Residues 1903–1912 (EAQAQFAAPE) show a composition bias toward low complexity. The span at 2132–2148 (SCYQSSAQPSTGVATSR) shows a compositional bias: polar residues.

The protein belongs to the TFIIIC subunit 1 family. In terms of assembly, part of the TFIIIC subcomplex TFIIIC2, consisting of six subunits, GTF3C1, GTF3C2, GTF3C3, GTF3C4, GTF3C5 and GTF3C6. Interacts with IGHMBP2. Interacts with MAF1.

Its subcellular location is the nucleus. Required for RNA polymerase III-mediated transcription. Component of TFIIIC that initiates transcription complex assembly on tRNA and is required for transcription of 5S rRNA and other stable nuclear and cytoplasmic RNAs. Binds to the box B promoter element. The sequence is that of General transcription factor 3C polypeptide 1 (Gtf3c1) from Rattus norvegicus (Rat).